A 23-amino-acid chain; its full sequence is Septenin 2 (23 aa).

Expressed in skin glands.

The protein resides in the secreted. Its function is as follows. May act as an antimicrobial peptide. The polypeptide is Septenin 2 (Osteopilus septentrionalis (Cuban treefrog)).